We begin with the raw amino-acid sequence, 319 residues long: Replication factor C small subunit (319 aa).

45–52 (GPPGTGKT) is a binding site for ATP.

It belongs to the activator 1 small subunits family. RfcS subfamily. As to quaternary structure, heteropentamer composed of four small subunits (RfcS) and one large subunit (RfcL). Both subunits interact with PCNA.

Its function is as follows. Part of the RFC clamp loader complex which loads the PCNA sliding clamp onto DNA. The complex possesses DNA-dependent ATPase activity which is further stimulated by PCNA. This is Replication factor C small subunit (rfcS) from Archaeoglobus fulgidus (strain ATCC 49558 / DSM 4304 / JCM 9628 / NBRC 100126 / VC-16).